The sequence spans 162 residues: 2-C-methyl-D-erythritol 2,4-cyclodiphosphate synthase (162 aa).

The a divalent metal cation site is built by Asp-10 and His-12. 4-CDP-2-C-methyl-D-erythritol 2-phosphate contacts are provided by residues 10-12 and 36-37; these read DVH and HS. His-44 provides a ligand contact to a divalent metal cation. 4-CDP-2-C-methyl-D-erythritol 2-phosphate contacts are provided by residues 58-60, 63-67, and Arg-144; these read DIG and FSDTD.

This sequence belongs to the IspF family. Homotrimer. A divalent metal cation serves as cofactor.

The catalysed reaction is 4-CDP-2-C-methyl-D-erythritol 2-phosphate = 2-C-methyl-D-erythritol 2,4-cyclic diphosphate + CMP. It participates in isoprenoid biosynthesis; isopentenyl diphosphate biosynthesis via DXP pathway; isopentenyl diphosphate from 1-deoxy-D-xylulose 5-phosphate: step 4/6. Its function is as follows. Involved in the biosynthesis of isopentenyl diphosphate (IPP) and dimethylallyl diphosphate (DMAPP), two major building blocks of isoprenoid compounds. Catalyzes the conversion of 4-diphosphocytidyl-2-C-methyl-D-erythritol 2-phosphate (CDP-ME2P) to 2-C-methyl-D-erythritol 2,4-cyclodiphosphate (ME-CPP) with a corresponding release of cytidine 5-monophosphate (CMP). This chain is 2-C-methyl-D-erythritol 2,4-cyclodiphosphate synthase, found in Burkholderia thailandensis (strain ATCC 700388 / DSM 13276 / CCUG 48851 / CIP 106301 / E264).